A 653-amino-acid chain; its full sequence is Protein SCARECROW (653 aa).

Disordered stretches follow at residues 1 to 69 (MAES…RRVS) and 193 to 265 (PSSS…AVQT). Positions 17–31 (PLRTTSSGSSSSNNR) are enriched in low complexity. A compositionally biased stretch (pro residues) spans 32-41 (GPPPPPPPPL). The span at 51–63 (EMSSNPDYNNSSR) shows a compositional bias: polar residues. The segment covering 209–230 (QISNNPSPPQQQQQHQQQQQQH) has biased composition (low complexity). Polar residues predominate over residues 246–265 (STDAPPQPETVTATVPAVQT). The GRAS domain maps to 281–650 (QKQDEEGLHL…LSLLTASAWT (370 aa)). The leucine repeat I (LRI) stretch occupies residues 288 to 351 (LHLLTLLLQC…LLNSCLGIYA (64 aa)). The short motif at 295–299 (LQCAE) is the LxCxE motif element. Positions 370–435 (FQVFNGISPL…GGPPHVRLTG (66 aa)) are VHIID. Residues 401–405 (VHIID) carry the VHIID motif. Residues 445–477 (ATGKRLSDFADKLGLPFEFCPLAEKVGNLDTER) form a leucine repeat II (LRII) region. Positions 486 to 573 (VAVHWLQHSL…QQLLSKEIRN (88 aa)) are PFYRE. The SAW stretch occupies residues 576–650 (AVGGPSRSGE…LSLLTASAWT (75 aa)).

Belongs to the GRAS family. Interacts with SHR, JKD and MGP. Interacts with SIEL. Interacts with RBR1 through its the LxCxE motif. In terms of tissue distribution, expressed in siliques, leaves and roots. Detected in the initial daughter cell before its asymmetric division and remains expressed only in the endodermal cell layer after the division. Expressed in the endodermis or starch sheath of the seedling hypocotyl, in the leaf bundle sheath cells and the root quiescent center.

It is found in the nucleus. Its function is as follows. Transcription factor required for quiescent center cells specification and maintenance of surrounding stem cells, and for the asymmetric cell division involved in radial pattern formation in roots. Essential for cell division but not differentiation of the ground tissue. Also required for normal shoot gravitropism. Regulates the radial organization of the shoot axial organs. Binds to the promoter of MGP, NUC, RLK and SCL3. Restricts SHR movment and sequesters it into the nucleus of the endodermis. The protein is Protein SCARECROW of Arabidopsis thaliana (Mouse-ear cress).